We begin with the raw amino-acid sequence, 284 residues long: uncharacterized protein (284 aa).

This is an uncharacterized protein from Acanthamoeba polyphaga (Amoeba).